A 517-amino-acid chain; its full sequence is Ribonuclease Y (517 aa).

Residues 2 to 22 form a helical membrane-spanning segment; sequence EILVYIIIGIAIFILSLLVGI. The region spanning 207–267 is the KH domain; sequence TTSTVALPTD…LRREIAKRTL (61 aa). Residues 333-426 form the HD domain; sequence VLEHSIEVAQ…VAASDALSAS (94 aa).

It belongs to the RNase Y family.

It localises to the cell membrane. In terms of biological role, endoribonuclease that initiates mRNA decay. The chain is Ribonuclease Y from Petrotoga mobilis (strain DSM 10674 / SJ95).